Here is a 143-residue protein sequence, read N- to C-terminus: Deoxyuridine 5'-triphosphate nucleotidohydrolase (143 aa).

Substrate-binding positions include 62 to 64 (RSG), N75, 79 to 81 (TID), and K89.

It belongs to the dUTPase family. It depends on Mg(2+) as a cofactor.

The catalysed reaction is dUTP + H2O = dUMP + diphosphate + H(+). Its pathway is pyrimidine metabolism; dUMP biosynthesis; dUMP from dCTP (dUTP route): step 2/2. Functionally, this enzyme is involved in nucleotide metabolism: it produces dUMP, the immediate precursor of thymidine nucleotides and it decreases the intracellular concentration of dUTP so that uracil cannot be incorporated into DNA. The chain is Deoxyuridine 5'-triphosphate nucleotidohydrolase from Clostridium kluyveri (strain ATCC 8527 / DSM 555 / NBRC 12016 / NCIMB 10680 / K1).